A 972-amino-acid chain; its full sequence is Mast/stem cell growth factor receptor Kit (972 aa).

A signal peptide spans 1-25 (MRGARGAWDFLCVLLLLLRVQTGSS). At 26-520 (QPSVSPEEAS…QIQPHTLFTP (495 aa)) the chain is on the extracellular side. Ig-like C2-type domains follow at residues 27–112 (PSVS…VFVR), 121–205 (DRSL…LKVR), 212–308 (PVVS…LEVV), 317–410 (PMIN…VYVN), and 413–507 (PEIL…FNFA). A disulfide bond links C58 and C97. Residues N130 and N145 are each glycosylated (N-linked (GlcNAc...) asparagine). Intrachain disulfides connect C136–C186, C151–C183, and C233–C290. 7 N-linked (GlcNAc...) asparagine glycosylation sites follow: N283, N300, N320, N352, N367, N463, and N486. Cysteines 428 and 491 form a disulfide. Residues 521–541 (LLIGFVVVAGMMCIIVMILTY) traverse the membrane as a helical segment. The Cytoplasmic portion of the chain corresponds to 542-972 (KYLQKPMYEV…SQPLLVRDDV (431 aa)). Y543 and Y549 each carry phosphotyrosine. Residue Y564 participates in Mg(2+) binding. Phosphotyrosine; by autocatalysis occurs at positions 564 and 566. An important for interaction with phosphotyrosine-binding proteins region spans residues 564 to 566 (YVY). Residues 585 to 933 (LSFGKTLGAG…ISESTNHIYS (349 aa)) form the Protein kinase domain. Residues 592–599 (GAGAFGKV), K619, and 667–673 (EYCCYGD) contribute to the ATP site. 2 positions are modified to phosphotyrosine; by autocatalysis: Y699 and Y717. Position 726 is a phosphotyrosine (Y726). Phosphoserine; by PKC/PRKCA is present on residues S737 and S742. Residue D788 is the Proton acceptor of the active site. Residue R792 coordinates ATP. Positions 793 and 806 each coordinate Mg(2+). A Phosphoserine modification is found at S817. Y819 is subject to Phosphotyrosine; by autocatalysis. S887 bears the Phosphoserine mark. The residue at position 896 (Y896) is a Phosphotyrosine. Phosphotyrosine; by autocatalysis is present on Y932. Phosphoserine is present on S955.

This sequence belongs to the protein kinase superfamily. Tyr protein kinase family. CSF-1/PDGF receptor subfamily. In terms of assembly, monomer in the absence of bound KITLG/SCF. Homodimer in the presence of bound KITLG/SCF, forming a heterotetramer with two KITLG/SCF molecules. Interacts (via phosphorylated tyrosine residues) with the adapter proteins GRB2 and GRB7 (via SH2 domain), and SH2B2/APS. Interacts (via C-terminus) with MPDZ (via the tenth PDZ domain). Interacts (via phosphorylated tyrosine residues) with PIK3R1 and PIK3CD. Interacts (via phosphorylated tyrosine) with CRK (isoform Crk-II), FYN, SHC1 and MATK/CHK (via SH2 domain). Interacts with LYN and FES/FPS. Interacts (via phosphorylated tyrosine residues) with the protein phosphatases PTPN6/SHP-1 (via SH2 domain), PTPN11/SHP-2 (via SH2 domain) and PTPRU. Interacts with PLCG1. Interacts with DOK1 and TEC. Interacts with IL1RAP (independent of stimulation with KITLG/SCF). A mast cell-specific KITLG/SCF-induced interleukin-33 signaling complex contains IL1RL1, IL1RAP, KIT and MYD88. Post-translationally, ubiquitinated by SOCS6. KIT is rapidly ubiquitinated after autophosphorylation induced by KITLG/SCF binding, leading to internalization and degradation. Autophosphorylated on tyrosine residues. KITLG/SCF binding promotes autophosphorylation. Phosphorylated tyrosine residues are important for interaction with specific binding partners.

It is found in the cell membrane. It catalyses the reaction L-tyrosyl-[protein] + ATP = O-phospho-L-tyrosyl-[protein] + ADP + H(+). With respect to regulation, present in an inactive conformation in the absence of bound ligand. KITLG/SCF binding leads to dimerization and activation by autophosphorylation on tyrosine residues. Activity is down-regulated by PRKCA-mediated phosphorylation on serine residues. In terms of biological role, tyrosine-protein kinase that acts as a cell-surface receptor for the cytokine KITLG/SCF and plays an essential role in the regulation of cell survival and proliferation, hematopoiesis, stem cell maintenance, gametogenesis, mast cell development, migration and function, and in melanogenesis. In response to KITLG/SCF binding, KIT can activate several signaling pathways. Phosphorylates PIK3R1, PLCG1, SH2B2/APS and CBL. Activates the AKT1 signaling pathway by phosphorylation of PIK3R1, the regulatory subunit of phosphatidylinositol 3-kinase. Activated KIT also transmits signals via GRB2 and activation of RAS, RAF1 and the MAP kinases MAPK1/ERK2 and/or MAPK3/ERK1. Promotes activation of STAT family members STAT1, STAT3, STAT5A and STAT5B. Activation of PLCG1 leads to the production of the cellular signaling molecules diacylglycerol and inositol 1,4,5-trisphosphate. KIT signaling is modulated by protein phosphatases, and by rapid internalization and degradation of the receptor. Activated KIT promotes phosphorylation of the protein phosphatases PTPN6/SHP-1 and PTPRU, and of the transcription factors STAT1, STAT3, STAT5A and STAT5B. Promotes phosphorylation of PIK3R1, CBL, CRK (isoform Crk-II), LYN, MAPK1/ERK2 and/or MAPK3/ERK1, PLCG1, SRC and SHC1. The polypeptide is Mast/stem cell growth factor receptor Kit (KIT) (Callithrix jacchus (White-tufted-ear marmoset)).